A 718-amino-acid polypeptide reads, in one-letter code: Exostosin-2 (718 aa).

The Cytoplasmic segment spans residues 1-25 (MCASVKYNIRGPALIPRMKTKHRIY). Residues 26-46 (YITLFSIVLLGLIATGMFQFW) form a helical; Signal-anchor for type II membrane protein membrane-spanning segment. Topologically, residues 47–718 (PHSIESSNDW…LKSFPNIGSL (672 aa)) are lumenal. 4 cysteine pairs are disulfide-bonded: Cys85/Cys90, Cys96/Cys151, Cys286/Cys300, and Cys318/Cys339. Residue Asn288 is glycosylated (N-linked (GlcNAc...) asparagine). Residues Leu461, Arg465, Asn490, and Asn517 each coordinate UDP. Positions 465, 490, 517, 522, 538, 539, and 540 each coordinate UDP-N-acetyl-alpha-D-glucosamine. Residues Asp538 and Asp539 each coordinate UDP. Asp540 lines the Mn(2+) pocket. A protein is bound by residues Tyr582 and Ser584. An intrachain disulfide couples Cys626 to Cys676. Residues Glu627 and Asp628 each coordinate UDP-N-acetyl-alpha-D-glucosamine. Asn637 carries an N-linked (GlcNAc...) asparagine glycan. A protein-binding residues include Lys651 and Lys653. Arg673 is a UDP-N-acetyl-alpha-D-glucosamine binding site.

The protein belongs to the glycosyltransferase 47 family. Part of the heparan sulfate polymerase, a dimeric complex composed of EXT1 and EXT2. Could also form homooligomeric complexes. Interacts with NDST1. Interacts with GALNT5. Mn(2+) serves as cofactor. In terms of processing, N-glycosylated at Asn-637. A soluble form is generated by proteolytic processing. In terms of tissue distribution, widely expressed.

Its subcellular location is the golgi apparatus membrane. It localises to the golgi apparatus. The protein resides in the cis-Golgi network membrane. It is found in the endoplasmic reticulum membrane. The protein localises to the secreted. The enzyme catalyses 3-O-{[(1-&gt;4)-beta-D-GlcA-(1-&gt;4)-alpha-D-GlcNAc](n)-(1-&gt;4)-beta-D-GlcA-(1-&gt;3)-beta-D-Gal-(1-&gt;3)-beta-D-Gal-(1-&gt;4)-beta-D-Xyl}-L-seryl-[protein] + UDP-N-acetyl-alpha-D-glucosamine = 3-O-{alpha-D-GlcNAc-[(1-&gt;4)-beta-D-GlcA-(1-&gt;4)-alpha-D-GlcNAc](n)-(1-&gt;4)-beta-D-GlcA-(1-&gt;3)-beta-D-Gal-(1-&gt;3)-beta-D-Gal-(1-&gt;4)-beta-D-Xyl}-L-seryl-[protein] + UDP + H(+). The protein operates within protein modification; protein glycosylation. In terms of biological role, glycosyltransferase forming with EXT1 the heterodimeric heparan sulfate polymerase which catalyzes the elongation of the heparan sulfate glycan backbone. Glycan backbone extension consists in the alternating transfer of (1-&gt;4)-beta-D-GlcA and (1-&gt;4)-alpha-D-GlcNAc residues from their respective UDP-sugar donors. Both EXT1 and EXT2 are required for the full activity of the polymerase since EXT1 bears the N-acetylglucosaminyl-proteoglycan 4-beta-glucuronosyltransferase activity within the complex while EXT2 carries the glucuronosyl-N-acetylglucosaminyl-proteoglycan 4-alpha-N-acetylglucosaminyltransferase activity. Heparan sulfate proteoglycans are ubiquitous components of the extracellular matrix and play an important role in tissue homeostasis and signaling. This chain is Exostosin-2, found in Homo sapiens (Human).